A 368-amino-acid chain; its full sequence is Protein mab-21-like 3 (368 aa).

The protein belongs to the mab-21 family.

The sequence is that of Protein mab-21-like 3 (mab21L3) from Xenopus laevis (African clawed frog).